Consider the following 358-residue polypeptide: NADH-quinone oxidoreductase subunit H (358 aa).

Transmembrane regions (helical) follow at residues 20-40 (ITVG…IPLI), 95-115 (ALFY…WAVI), 128-148 (IGLL…IIAG), 168-188 (ISYE…SGSM), 206-226 (VFSW…ISAV), 253-273 (GFAF…IAAL), 295-315 (TPSA…YLWI), and 334-354 (VLIP…ISPL).

This sequence belongs to the complex I subunit 1 family. As to quaternary structure, NDH-1 is composed of 14 different subunits. Subunits NuoA, H, J, K, L, M, N constitute the membrane sector of the complex.

It is found in the cell inner membrane. It carries out the reaction a quinone + NADH + 5 H(+)(in) = a quinol + NAD(+) + 4 H(+)(out). Its function is as follows. NDH-1 shuttles electrons from NADH, via FMN and iron-sulfur (Fe-S) centers, to quinones in the respiratory chain. The immediate electron acceptor for the enzyme in this species is believed to be ubiquinone. Couples the redox reaction to proton translocation (for every two electrons transferred, four hydrogen ions are translocated across the cytoplasmic membrane), and thus conserves the redox energy in a proton gradient. This subunit may bind ubiquinone. The protein is NADH-quinone oxidoreductase subunit H of Neisseria meningitidis serogroup B (strain ATCC BAA-335 / MC58).